A 92-amino-acid polypeptide reads, in one-letter code: Small ribosomal subunit protein uS19c (92 aa).

The protein belongs to the universal ribosomal protein uS19 family.

It localises to the plastid. Its subcellular location is the chloroplast. Protein S19 forms a complex with S13 that binds strongly to the 16S ribosomal RNA. The sequence is that of Small ribosomal subunit protein uS19c from Guizotia abyssinica (Niger).